A 339-amino-acid polypeptide reads, in one-letter code: STEAP1 protein (339 aa).

A run of 2 helical transmembrane segments spans residues 71–91 (WHLP…YTLL) and 119–139 (PMVS…AAIV). Residues 118 to 265 (LPMVSITLLA…KLGIVSLLLG (148 aa)) form the Ferric oxidoreductase domain. Residues glutamine 140 and arginine 161 each coordinate FAD. 2 helical membrane-spanning segments follow: residues 164 to 184 (FGLL…SYPM) and 218 to 238 (IYVS…VTSI). Histidine 175 serves as a coordination point for heme b. FAD is bound by residues serine 237 and glutamine 254. The next 2 membrane-spanning stretches (helical) occupy residues 258-278 (GIVS…NKWI) and 291-311 (FMIA…LFLP). Histidine 268 is a heme b binding site.

It belongs to the STEAP family. In terms of assembly, homotrimer. FAD serves as cofactor. Heme b is required as a cofactor. In terms of tissue distribution, ubiquitously expressed. Highly expressed in prostate tumors.

It is found in the endosome membrane. Its subcellular location is the cell membrane. Its function is as follows. Does not function as a metalloreductase due to the absence of binding sites for the electron-donating substrate NADPH. Promotes Fe(3+) reduction when fused to the NADPH-binding domain of STEAP4. This is STEAP1 protein (STEAP1) from Homo sapiens (Human).